The sequence spans 164 residues: Neurotrophin-3 (164 aa).

The signal sequence occupies residues 1 to 3; sequence IQS. The propeptide occupies 4-118; the sequence is TSMDQGBLSE…GLNRTSRRKR (115 aa). The segment at 89 to 126 is disordered; that stretch reads LLSENTPLEPPPLYLTEEPMGLNRTSRRKRFAEGKSHR. Residue Asn111 is glycosylated (N-linked (GlcNAc...) asparagine).

Belongs to the NGF-beta family.

Its subcellular location is the secreted. Its function is as follows. Seems to promote the survival of visceral and proprioceptive sensory neurons. This chain is Neurotrophin-3 (NTF3), found in Cylindrophis ruffus (Red-tailed pipe snake).